We begin with the raw amino-acid sequence, 365 residues long: Aminomethyltransferase (365 aa).

It belongs to the GcvT family. The glycine cleavage system is composed of four proteins: P, T, L and H.

The catalysed reaction is N(6)-[(R)-S(8)-aminomethyldihydrolipoyl]-L-lysyl-[protein] + (6S)-5,6,7,8-tetrahydrofolate = N(6)-[(R)-dihydrolipoyl]-L-lysyl-[protein] + (6R)-5,10-methylene-5,6,7,8-tetrahydrofolate + NH4(+). Its function is as follows. The glycine cleavage system catalyzes the degradation of glycine. The sequence is that of Aminomethyltransferase from Natranaerobius thermophilus (strain ATCC BAA-1301 / DSM 18059 / JW/NM-WN-LF).